A 209-amino-acid chain; its full sequence is Cerebral peptide 1 (209 aa).

A signal peptide spans 1–20; the sequence is MLLAKISVVVLLLAIDGTSS. Over residues 21–39 the composition is skewed to polar residues; that stretch reads SESTDNVVLSSSPDSQKAA. Positions 21-43 are cleaved as a propeptide — connecting peptide 1; sequence SESTDNVVLSSSPDSQKAATSRH. Residues 21–56 form a disordered region; that stretch reads SESTDNVVLSSSPDSQKAATSRHKRAPGWGKRSSLN. Tryptophan amide is present on tryptophan 49. A propeptide spans 53-77 (connecting peptide 2); it reads SSLNDEDLFADSDSAQELLDSVAAL. Tryptophan amide occurs at positions 83 and 105. The interval 98 to 169 is disordered; it reads EAKRAPGWGK…APGWGKRSGG (72 aa). Residues 109 to 122 constitute a propeptide, connecting peptide 4; that stretch reads GQEIDVDEDGSEQE. A tryptophan amide mark is found at tryptophan 128, tryptophan 135, tryptophan 142, tryptophan 149, tryptophan 156, and tryptophan 163. A propeptide spans 167–191 (connecting peptide 5); it reads SGGDYCETLEKMVDAYIYKAVEVDS. A disulfide bridge links cysteine 172 with cysteine 197.

As to quaternary structure, homodimer; disulfide-linked. As to expression, cerebral peptide 1 is expressed in the cerebral, pedal and buccal ganglia and B1 and B2 neurons. APGW-amide is expressed in buccal ganglia and several neurons.

Its subcellular location is the secreted. May function as a peptide transmitter. In Aplysia californica (California sea hare), this protein is Cerebral peptide 1.